The following is a 150-amino-acid chain: Aspartate 1-decarboxylase 2 (150 aa).

The active-site Schiff-base intermediate with substrate; via pyruvic acid is serine 24. A Pyruvic acid (Ser) modification is found at serine 24. A substrate-binding site is contributed by threonine 56. Tyrosine 57 functions as the Proton donor in the catalytic mechanism. 72-74 (GAA) serves as a coordination point for substrate.

It belongs to the PanD family. As to quaternary structure, heterooctamer of four alpha and four beta subunits. Requires pyruvate as cofactor. Post-translationally, is synthesized initially as an inactive proenzyme, which is activated by self-cleavage at a specific serine bond to produce a beta-subunit with a hydroxyl group at its C-terminus and an alpha-subunit with a pyruvoyl group at its N-terminus.

The protein resides in the cytoplasm. The enzyme catalyses L-aspartate + H(+) = beta-alanine + CO2. It participates in cofactor biosynthesis; (R)-pantothenate biosynthesis; beta-alanine from L-aspartate: step 1/1. Functionally, catalyzes the pyruvoyl-dependent decarboxylation of aspartate to produce beta-alanine. The chain is Aspartate 1-decarboxylase 2 from Mesorhizobium japonicum (strain LMG 29417 / CECT 9101 / MAFF 303099) (Mesorhizobium loti (strain MAFF 303099)).